Here is a 309-residue protein sequence, read N- to C-terminus: Prephenate dehydratase (309 aa).

A Prephenate dehydratase domain is found at glycine 3–cysteine 191. An ACT domain is found at serine 205–proline 282.

As to quaternary structure, homodimer.

The catalysed reaction is prephenate + H(+) = 3-phenylpyruvate + CO2 + H2O. The protein operates within amino-acid biosynthesis; L-phenylalanine biosynthesis; phenylpyruvate from prephenate: step 1/1. This Mycolicibacterium gilvum (strain PYR-GCK) (Mycobacterium gilvum (strain PYR-GCK)) protein is Prephenate dehydratase (pheA).